A 153-amino-acid polypeptide reads, in one-letter code: Arginine regulator (153 aa).

It belongs to the ArgR family.

Its subcellular location is the cytoplasm. It participates in amino-acid degradation; L-arginine degradation via ADI pathway. Functionally, regulates the transcription of the arc operon, involved in arginine catabolism. This Lactiplantibacillus plantarum (strain ATCC BAA-793 / NCIMB 8826 / WCFS1) (Lactobacillus plantarum) protein is Arginine regulator (argR1).